The chain runs to 817 residues: Probable inorganic carbon transporter subunit DabA (817 aa).

Zn(2+) is bound by residues cysteine 301, aspartate 303, histidine 491, and cysteine 506. Disordered regions lie at residues 598-617 (NTSV…ERRA) and 794-817 (GWHA…GVPS).

Belongs to the inorganic carbon transporter (TC 9.A.2) DabA family. As to quaternary structure, forms a complex with DabB. The cofactor is Zn(2+).

It is found in the cell inner membrane. Functionally, part of an energy-coupled inorganic carbon pump. This chain is Probable inorganic carbon transporter subunit DabA, found in Salinibacter ruber (strain DSM 13855 / M31).